The sequence spans 125 residues: Small ribosomal subunit protein uS13 (125 aa).

Positions 92–125 (RRHLPVHGQRTKTNARTRKGPKKTVAGKKKAGKK) are disordered.

The protein belongs to the universal ribosomal protein uS13 family. Part of the 30S ribosomal subunit. Forms a loose heterodimer with protein S19. Forms two bridges to the 50S subunit in the 70S ribosome.

Its function is as follows. Located at the top of the head of the 30S subunit, it contacts several helices of the 16S rRNA. In the 70S ribosome it contacts the 23S rRNA (bridge B1a) and protein L5 of the 50S subunit (bridge B1b), connecting the 2 subunits; these bridges are implicated in subunit movement. Contacts the tRNAs in the A and P-sites. In Saccharopolyspora erythraea (strain ATCC 11635 / DSM 40517 / JCM 4748 / NBRC 13426 / NCIMB 8594 / NRRL 2338), this protein is Small ribosomal subunit protein uS13.